We begin with the raw amino-acid sequence, 250 residues long: Pre-protein VI (250 aa).

Residues Met1 to Gly33 constitute a propeptide that is removed on maturation. The amphipathic alpha-helix essential for membrane lytic activity stretch occupies residues Ala34 to Tyr54. Positions Ser36–Asn53 are involved in endosomal membrane lysis. Residues Gly48–Gln74 form an interaction with hexon protein region. Residues Leu67–Phe76 carry the Nuclear export signal motif. Residues Ile103–Glu147 are disordered. Ser124 is modified (phosphoserine; by host). Residues Gly127–Thr140 show a composition bias toward basic and acidic residues. The short motif at Lys131–Pro135 is the Nuclear localization signal element. The residue at position 143 (Thr143) is a Phosphothreonine; by host. The PPXY motif motif lies at Pro148 to Tyr151. Residues Pro206–Ser220 are compositionally biased toward low complexity. The segment at Pro206–Ser226 is disordered. The short motif at Ser231–Gln242 is the Nuclear export signal element. Residues Leu233–Leu239 are interaction with hexon protein. Residues Gly240–Phe250 are binds to importin alpha/beta, involved in hexon nuclear import. The Nuclear localization signal signature appears at Lys245–Arg248.

Belongs to the adenoviridae protein VI family. As to quaternary structure, interacts with hexon protein; this interaction allows nuclear import of hexon trimers and possibly pre-capsid assembly. Interacts (via C-terminal NLS) with importin alpha/beta. Interacts (via PPxY motif) with host NEDD4 ubiquitine ligase; this interaction might play a role in virus intracellular transport during entry. Part of a complex composed of the core-capsid bridging protein, the endosome lysis protein VI and the hexon-linking protein VIII; these interactions bridge the virus core to the capsid. Interacts with peripentonal hexons; this interaction stabilizes the capsid by gluing two peripentonal hexons together and joining them with an adjacent group-of-nine hexon. In terms of assembly, heterodimer with the viral protease; disulfide-linked. Interacts with the viral protease. Post-translationally, ubiquitinated by Nedd4 following partial capsid disassembly; which might play a role in intracellular virus movement during entry. Contains the major nuclear import and export signals. Proteolytically removed during virion maturation. The processing of the C-terminus turns the precursor into a mature viral structural protein and abrogates its ability to promote hexon import and act as a potential chaperone protein.

It localises to the host nucleus. The protein localises to the host cytoplasm. Its subcellular location is the virion. Functionally, during virus assembly, promotes hexon trimers nuclear import through nuclear pore complexes via an importin alpha/beta-dependent mechanism. By analogy to herpesviruses capsid assembly, might act as a chaperone to promote the formation of the icosahedral capsid. In terms of biological role, structural component of the virion that provides increased stability to the particle shell through its interaction with the core-capsid bridging protein and the hexon-linking protein VIII. Fibers shedding during virus entry into host cell allows the endosome lysis protein to be exposed as a membrane-lytic peptide. Exhibits pH-independent membrane fragmentation activity and probably mediates viral rapid escape from host endosome via organellar membrane lysis. It is not clear if it then remains partially associated with the capsid and involved in the intracellular microtubule-dependent transport of capsid to the nucleus, or if it is lost during endosomal penetration. Cofactor that activates the viral protease. Binds to viral protease in a 1:1 ratio. This chain is Pre-protein VI, found in Human adenovirus C serotype 2 (HAdV-2).